The sequence spans 492 residues: NAD(P)H-quinone oxidoreductase subunit 2 A, chloroplastic (492 aa).

Transmembrane regions (helical) follow at residues 6–26, 39–59, 81–101, 106–126, 131–151, 165–185, 209–229, 277–297, 305–325, 336–356, 377–397, 400–420, and 464–484; these read LLLF…GLIL, ISWF…ALLF, IFQF…VEYI, MAIT…MFLC, LITI…LSGY, YLLM…WLYG, PGIL…LSPA, WHLL…LIAI, MLAY…IVGD, YMLF…SFGL, ALSL…AGFF, LHLF…IGLL, and FSMI…NPII.

The protein belongs to the complex I subunit 2 family. NDH is composed of at least 16 different subunits, 5 of which are encoded in the nucleus.

The protein localises to the plastid. It localises to the chloroplast thylakoid membrane. The catalysed reaction is a plastoquinone + NADH + (n+1) H(+)(in) = a plastoquinol + NAD(+) + n H(+)(out). It catalyses the reaction a plastoquinone + NADPH + (n+1) H(+)(in) = a plastoquinol + NADP(+) + n H(+)(out). Its function is as follows. NDH shuttles electrons from NAD(P)H:plastoquinone, via FMN and iron-sulfur (Fe-S) centers, to quinones in the photosynthetic chain and possibly in a chloroplast respiratory chain. The immediate electron acceptor for the enzyme in this species is believed to be plastoquinone. Couples the redox reaction to proton translocation, and thus conserves the redox energy in a proton gradient. The sequence is that of NAD(P)H-quinone oxidoreductase subunit 2 A, chloroplastic from Phaseolus vulgaris (Kidney bean).